The primary structure comprises 425 residues: GTPase Obg (425 aa).

The 158-residue stretch at 1 to 158 folds into the Obg domain; that stretch reads MFVDVARIYV…RWLLLELKVV (158 aa). Positions 159–330 constitute an OBG-type G domain; it reads ADVGLVGFPN…LLEAAYDLIR (172 aa). GTP-binding positions include 165 to 172, 190 to 194, 212 to 215, 282 to 285, and 311 to 313; these read GFPNAGKS, FTTLT, DIPG, NKMD, and SGA. Mg(2+) is bound by residues Ser-172 and Thr-192. One can recognise an OCT domain in the interval 345–422; sequence VYRPKEEGWR…VCDIEFELMA (78 aa).

This sequence belongs to the TRAFAC class OBG-HflX-like GTPase superfamily. OBG GTPase family. In terms of assembly, monomer. Requires Mg(2+) as cofactor.

It is found in the cytoplasm. In terms of biological role, an essential GTPase which binds GTP, GDP and possibly (p)ppGpp with moderate affinity, with high nucleotide exchange rates and a fairly low GTP hydrolysis rate. Plays a role in control of the cell cycle, stress response, ribosome biogenesis and in those bacteria that undergo differentiation, in morphogenesis control. This is GTPase Obg from Symbiobacterium thermophilum (strain DSM 24528 / JCM 14929 / IAM 14863 / T).